Here is a 313-residue protein sequence, read N- to C-terminus: MARWRPDTAEREATPEALYLRRREFLALGAAGAVGLLLPRGARAGEPTGAALQVARKVDQAGGETPTPWDSVTGYNNFYELGTSKEDPSRNAGSLRPRPWTVTVAGEVKKPQTLDLDALTRMFPLEERVYRMRCVEAWSMVIPWVGFPLGDLVRRLEPTSRAKYVAFQTLLDRDQLPGQRRPVLPWPYVESLRIDEAAHPLALLAVGLYGRVLPGQNGAPLRLVVPWKYGFKGAKSIVRITFLADRPHTTWNDAAPDEYGFYANVNPEVDHPRWSQARERRIGEFFRRKTLPFNGYAAEVASLYAGLDLRKNY.

The tat-type signal signal peptide spans 1 to 44; sequence MARWRPDTAEREATPEALYLRRREFLALGAAGAVGLLLPRGARA. Mo-molybdopterin contacts are provided by residues Asn-76, 79-80, Cys-134, Thr-169, Asn-217, Arg-222, and 233-235; these read YE and GAK.

Belongs to the MsrP family. As to quaternary structure, heterodimer of a catalytic subunit (MsrP) and a heme-binding subunit (MsrQ). The cofactor is Mo-molybdopterin. Post-translationally, predicted to be exported by the Tat system. The position of the signal peptide cleavage has not been experimentally proven.

It is found in the periplasm. The enzyme catalyses L-methionyl-[protein] + a quinone + H2O = L-methionyl-(S)-S-oxide-[protein] + a quinol. The catalysed reaction is L-methionyl-[protein] + a quinone + H2O = L-methionyl-(R)-S-oxide-[protein] + a quinol. Part of the MsrPQ system that repairs oxidized periplasmic proteins containing methionine sulfoxide residues (Met-O), using respiratory chain electrons. Thus protects these proteins from oxidative-stress damage caused by reactive species of oxygen and chlorine generated by the host defense mechanisms. MsrPQ is essential for the maintenance of envelope integrity under bleach stress, rescuing a wide series of structurally unrelated periplasmic proteins from methionine oxidation. The catalytic subunit MsrP is non-stereospecific, being able to reduce both (R-) and (S-) diastereoisomers of methionine sulfoxide. The polypeptide is Protein-methionine-sulfoxide reductase catalytic subunit MsrP (Anaeromyxobacter dehalogenans (strain 2CP-C)).